Here is a 218-residue protein sequence, read N- to C-terminus: Large ribosomal subunit protein uL3 (218 aa).

It belongs to the universal ribosomal protein uL3 family. As to quaternary structure, part of the 50S ribosomal subunit. Forms a cluster with proteins L14 and L19.

Functionally, one of the primary rRNA binding proteins, it binds directly near the 3'-end of the 23S rRNA, where it nucleates assembly of the 50S subunit. The chain is Large ribosomal subunit protein uL3 from Syntrophus aciditrophicus (strain SB).